A 1542-amino-acid polypeptide reads, in one-letter code: Pleiotropic ABC efflux transporter of multiple drugs PDH1 (1542 aa).

A compositionally biased stretch (low complexity) spans 1 to 14; sequence MNTPDDSSVSSVDS. Residues 1 to 61 are disordered; it reads MNTPDDSSVS…APADGSAPLD (61 aa). Residues 1-517 lie on the Cytoplasmic side of the membrane; it reads MNTPDDSSVS…LIRNFWRIKN (517 aa). The segment covering 24–33 has biased composition (basic and acidic residues); it reads NVEKRIRELA. The span at 35–47 shows a compositional bias: polar residues; sequence SLTQQSLTSSNRS. Positions 153–409 constitute an ABC transporter 1 domain; it reads VKLLNAVWRK…FQKMGYFCPK (257 aa). The next 6 helical transmembrane spans lie at 518-540, 552-574, 603-625, 634-652, 662-684, and 773-792; these read SASV…GSMF, FYFR…LLEI, VISE…YFLV, FFFY…SHLF, LQEA…GFAI, and GFGV…LILC. The Cytoplasmic segment spans residues 793–1220; that stretch reads EFNEGAKQKG…LFQQYWRTPD (428 aa). Residues 825–834 are compositionally biased toward basic and acidic residues; that stretch reads TKMHTDKNDI. Residues 825–846 are disordered; it reads TKMHTDKNDIENNSESITSNAT. Residues 835-846 show a composition bias toward polar residues; that stretch reads ENNSESITSNAT. The region spanning 885-1128 is the ABC transporter 2 domain; sequence FHWQNLCYDV…MIKYFEDHGA (244 aa). 921 to 928 is a binding site for ATP; it reads GASGAGKT. 6 consecutive transmembrane segments (helical) span residues 1221 to 1241, 1256 to 1276, 1296 to 1316, 1342 to 1362, 1370 to 1390, and 1495 to 1515; these read YLWS…FTFF, SIFM…PTFV, AFIL…GTLA, LFWL…LFVI, TAAH…GVMA, and GIFI…YWLA. Residues 1516–1542 are Cytoplasmic-facing; it reads RVPKTNGKIAKNGKTAKVNFIRRLIPF.

Belongs to the ABC transporter superfamily. ABCG family. PDR (TC 3.A.1.205) subfamily. In terms of processing, phosphorylated by PKA. Dephosphorylated on glucose depletion and independently rephosphorylated during glucose exposure or under stress.

It localises to the cell membrane. In terms of biological role, pleiotropic ABC efflux transporter that confers resistance to structurally and functionally unrelated compounds including caspofungin or azoles such as fluconazole, itraconazole, posaconazole, voriconazole, and isavuconazole. Does not play a role in the azole resistance in mature biofilms. In Candida glabrata (strain ATCC 2001 / BCRC 20586 / JCM 3761 / NBRC 0622 / NRRL Y-65 / CBS 138) (Yeast), this protein is Pleiotropic ABC efflux transporter of multiple drugs PDH1.